The primary structure comprises 340 residues: MTQAVLKELAKAELHCHLDGSLSLPAIRKLANMADIILPSSDKELRKYVIAPAQTESLVDYLKTFEFIRPLLQTKEALRFAAYDVARQAALENVIYIEIRFAPELSMDKGLTASDTVLAVLEGLADAQKEFNIVARALVCGMRQSSHKTTKDIIKHIVDLAPKGLVGFDFAGDEFSYPTDSLVDLIQEVKRSGYPMTLHAGECGCAKHIADSLNLGIKRMGHVTALTGQRDLIKRFVEEDVVAEMCLTSNLQTKAASSIQSFPYQELYDAGGKITINTDNRTVSDTNLTKEYSLFVTYFGTKIEDFLVFNQNAVKASFTSDSEKDTLLHKLQENYDSYLK.

Residues histidine 15 and histidine 17 each contribute to the Zn(2+) site. Residues histidine 17, aspartate 19, and glycine 172 each contribute to the substrate site. Histidine 199 provides a ligand contact to Zn(2+). Residue glutamate 202 is the Proton donor of the active site. Zn(2+) is bound at residue aspartate 279.

This sequence belongs to the metallo-dependent hydrolases superfamily. Adenosine and AMP deaminases family. Adenosine deaminase subfamily. The cofactor is Zn(2+).

It catalyses the reaction adenosine + H2O + H(+) = inosine + NH4(+). The catalysed reaction is 2'-deoxyadenosine + H2O + H(+) = 2'-deoxyinosine + NH4(+). Catalyzes the hydrolytic deamination of adenosine and 2-deoxyadenosine. This is Adenosine deaminase from Streptococcus agalactiae serotype Ia (strain ATCC 27591 / A909 / CDC SS700).